Consider the following 117-residue polypeptide: Large ribosomal subunit protein bL19 (117 aa).

It belongs to the bacterial ribosomal protein bL19 family.

This protein is located at the 30S-50S ribosomal subunit interface and may play a role in the structure and function of the aminoacyl-tRNA binding site. The chain is Large ribosomal subunit protein bL19 from Thermotoga neapolitana (strain ATCC 49049 / DSM 4359 / NBRC 107923 / NS-E).